Here is a 204-residue protein sequence, read N- to C-terminus: Holliday junction branch migration complex subunit RuvA (204 aa).

Positions 1-64 (MIGRLQGILL…EDAHLLFGFA (64 aa)) are domain I. The tract at residues 65 to 143 (QKTDRTLFRE…GIKQSDFFVE (79 aa)) is domain II. Residues 144–155 (STHIPLSPSIES) are flexible linker. Residues 156-204 (HSESSSDEAISALIALGYKPAEAEKMVKRVAKPELTSEQVIREALKAAL) are domain III.

This sequence belongs to the RuvA family. In terms of assembly, homotetramer. Forms an RuvA(8)-RuvB(12)-Holliday junction (HJ) complex. HJ DNA is sandwiched between 2 RuvA tetramers; dsDNA enters through RuvA and exits via RuvB. An RuvB hexamer assembles on each DNA strand where it exits the tetramer. Each RuvB hexamer is contacted by two RuvA subunits (via domain III) on 2 adjacent RuvB subunits; this complex drives branch migration. In the full resolvosome a probable DNA-RuvA(4)-RuvB(12)-RuvC(2) complex forms which resolves the HJ.

Its subcellular location is the cytoplasm. The RuvA-RuvB-RuvC complex processes Holliday junction (HJ) DNA during genetic recombination and DNA repair, while the RuvA-RuvB complex plays an important role in the rescue of blocked DNA replication forks via replication fork reversal (RFR). RuvA specifically binds to HJ cruciform DNA, conferring on it an open structure. The RuvB hexamer acts as an ATP-dependent pump, pulling dsDNA into and through the RuvAB complex. HJ branch migration allows RuvC to scan DNA until it finds its consensus sequence, where it cleaves and resolves the cruciform DNA. The polypeptide is Holliday junction branch migration complex subunit RuvA (Haemophilus influenzae (strain 86-028NP)).